Reading from the N-terminus, the 90-residue chain is MARMVNCIKLGREAEGLDLPPVPGELGKRIYESVSKEAWQQWVKYQTMLINENRLNLMDPRARKYLSEQMEKHFFEGGADAIGGFVPPAQ.

This sequence belongs to the Fe(2+)-trafficking protein family.

Functionally, could be a mediator in iron transactions between iron acquisition and iron-requiring processes, such as synthesis and/or repair of Fe-S clusters in biosynthetic enzymes. The chain is Probable Fe(2+)-trafficking protein from Azoarcus sp. (strain BH72).